A 180-amino-acid polypeptide reads, in one-letter code: N-terminal acetyltransferase B complex catalytic subunit naa20 (180 aa).

The region spanning 2-156 (TDTRKFKATD…DSFDMRKPLS (155 aa)) is the N-acetyltransferase domain.

The protein belongs to the acetyltransferase family. Component of the N-terminal acetyltransferase B (NatB) complex.

The protein localises to the cytoplasm. It localises to the nucleus. The catalysed reaction is N-terminal L-methionyl-L-asparaginyl-[protein] + acetyl-CoA = N-terminal N(alpha)-acetyl-L-methionyl-L-asparaginyl-[protein] + CoA + H(+). It catalyses the reaction N-terminal L-methionyl-L-glutaminyl-[protein] + acetyl-CoA = N-terminal N(alpha)-acetyl-L-methionyl-L-glutaminyl-[protein] + CoA + H(+). It carries out the reaction N-terminal L-methionyl-L-aspartyl-[protein] + acetyl-CoA = N-terminal N(alpha)-acetyl-L-methionyl-L-aspartyl-[protein] + CoA + H(+). The enzyme catalyses N-terminal L-methionyl-L-glutamyl-[protein] + acetyl-CoA = N-terminal N(alpha)-acetyl-L-methionyl-L-glutamyl-[protein] + CoA + H(+). In terms of biological role, catalytic subunit of the NatB N-terminal acetyltransferase, which catalyzes acetylation of the amino-terminal methionine residues of all proteins beginning with Met-Asp or Met-Glu and of some proteins beginning with Met-Asn, Met-Gln or Met-Met. In Schizosaccharomyces pombe (strain 972 / ATCC 24843) (Fission yeast), this protein is N-terminal acetyltransferase B complex catalytic subunit naa20 (naa20).